Consider the following 130-residue polypeptide: Cysteine methyltransferase (130 aa).

The enzyme catalyses [trehalose-6-phosphate synthase]-L-cysteine + S-adenosyl-L-methionine = [trehalose-6-phosphate synthase]-S-methyl-L-cysteine + S-adenosyl-L-homocysteine + H(+). In terms of biological role, S-adenosyl-L-methionine-dependent protein-cysteine S-methyltransferase with broad substrate specificity. Methylates trehalose-6-phosphate synthase (TPS), enhancing its enzymatic activity and promoting trehalose synthesis upon entry of cells into stationary phase. The sequence is that of Cysteine methyltransferase from Saccharomyces cerevisiae (Baker's yeast).